The following is a 648-amino-acid chain: Adhesion G-protein coupled receptor G1 (648 aa).

The signal sequence occupies residues 1–24 (MKQNPAKTARMWIIICLLFVLGQA). At 25–370 (TDNDRDFKMC…STVRHLKALT (346 aa)) the chain is on the extracellular side. Cys-34 and Cys-96 are oxidised to a cystine. Asn-62, Asn-91, Asn-114, Asn-146, Asn-222, Asn-262, and Asn-286 each carry an N-linked (GlcNAc...) asparagine glycan. Cys-127 and Cys-176 are joined by a disulfide. One can recognise a GAIN-B domain in the interval 214-361 (MDEEFTGHNF…AILVQVEQKS (148 aa)). 2 cysteine pairs are disulfide-bonded: Cys-313-Cys-343 and Cys-331-Cys-345. A GPS region spans residues 313 to 361 (CVSWDTKQDNEVNWKDDGCDTVKINEEQTECHCNHLTYFAILVQVEQKS). The stachel stretch occupies residues 349–361 (TYFAILVQVEQKS). The helical transmembrane segment at 371–391 (FITAVGCAVSLVSCLVLFYWL) threads the bilayer. The Cytoplasmic segment spans residues 392-408 (CKRRRGKKNQISLVHRG). A helical transmembrane segment spans residues 409–429 (LVVAIFLLCLFFILTGILANV). The Extracellular segment spans residues 430–443 (ANETVCQLTGSLLH). N-linked (GlcNAc...) asparagine glycosylation is present at Asn-431. A helical membrane pass occupies residues 444-464 (YGLLSTLCWMAMEVFHTFLLV). Topologically, residues 465 to 471 (RKVFNSP) are cytoplasmic. The helical transmembrane segment at 472-492 (LPIWIFYLMGFGFPFLLVSIL) threads the bilayer. Topologically, residues 493-530 (LSVGDIYGERKIKPSDDVNNPYRMCWMTEGDKSQLAHY) are extracellular. A helical transmembrane segment spans residues 531–551 (IINIGLLAVVVSSGLVMLFLV). At 552–563 (VREIRNRPDWKK) the chain is on the cytoplasmic side. The helical transmembrane segment at 564 to 586 (IHVAFLSIWGLTCLYGTTWALGF) threads the bilayer. Topologically, residues 587–595 (LDFGPFSEV) are extracellular. Residues 596 to 618 (TLFLFCIINSLQGFFLMLRYYAL) traverse the membrane as a helical segment. Topologically, residues 619–648 (ERMKKKDVSSSDGSSSGSSKQHMLQTNEKS) are cytoplasmic.

This sequence belongs to the G-protein coupled receptor 2 family. LN-TM7 subfamily. As to quaternary structure, heterodimer of 2 chains generated by proteolytic processing; the large extracellular N-terminal fragment (ADGRG1 NT) and the membrane-bound C-terminal fragment (ADGRG1-CT) predominantly remain associated and non-covalently linked. Autoproteolytically cleaved into 2 fragments; the large extracellular N-terminal fragment (ADGRG1 NT) and the membrane-bound C-terminal fragment (ADGRG1 CT) predominantly remain associated and non-covalently linked.

Its subcellular location is the cell membrane. Forms a heterodimer of 2 chains generated by proteolytic processing that remain associated through non-covalent interactions mediated by the GAIN-B domain. In the inactivated receptor, the Stachel sequence (also named stalk) is embedded in the GAIN-B domain, where it adopts a beta-strand conformation. On activation, the Stachel moves into the 7 transmembrane region and adopts a twisted hook-shaped configuration that forms contacts within the receptor, leading to coupling of a G-alpha protein, which activates signaling. The cleaved GAIN-B and N-terminal domains can then dissociate from the rest of the receptor. In terms of biological role, adhesion G-protein coupled receptor (aGPCR), which is involved in oligodendrocyte development and maintenance of peripheral myelin. Ligand binding causes a conformation change that triggers signaling via guanine nucleotide-binding proteins (G proteins) and modulates the activity of downstream effectors, such as RhoA pathway. Adgrg1 is coupled to G(12) and/or G(13) G proteins (gna12 and gna13, respectively) and mediates the activation Rho small GTPases. Adgrg1-dependent RhoA signaling promotes timely radial sorting of axons. Required to establish proper myelin thickness and facilitate organization of the myelin sheath in the mature peripheral nervous system. The sequence is that of Adhesion G-protein coupled receptor G1 from Danio rerio (Zebrafish).